Reading from the N-terminus, the 237-residue chain is HTH-type transcriptional regulator GmuR (237 aa).

An HTH gntR-type domain is found at 1–69 (MNKYEIIANE…RGHGTFIIQS (69 aa)). Residues 29 to 48 (EVSLAKEFNSSRMTMKRALD) constitute a DNA-binding region (H-T-H motif).

The protein localises to the cytoplasm. In terms of biological role, transcriptional repressor of the gmuBACDREFG operon which is involved in the uptake and degradation of glucomannan. The polypeptide is HTH-type transcriptional regulator GmuR (gmuR) (Bacillus subtilis (strain 168)).